The primary structure comprises 254 residues: Small ribosomal subunit protein uS3 (254 aa).

The 69-residue stretch at 38 to 106 (IRKYVLARIP…DVQINIFEIK (69 aa)) folds into the KH type-2 domain. Low complexity predominate over residues 215–238 (NVGNAASGASSSSNNDNASPNQGG). The tract at residues 215-254 (NVGNAASGASSSSNNDNASPNQGGPRRKRGGEGNRKKSNK) is disordered. The segment covering 244–254 (GGEGNRKKSNK) has biased composition (basic and acidic residues).

This sequence belongs to the universal ribosomal protein uS3 family. Part of the 30S ribosomal subunit. Forms a tight complex with proteins S10 and S14.

Binds the lower part of the 30S subunit head. Binds mRNA in the 70S ribosome, positioning it for translation. This is Small ribosomal subunit protein uS3 from Cytophaga hutchinsonii (strain ATCC 33406 / DSM 1761 / CIP 103989 / NBRC 15051 / NCIMB 9469 / D465).